The chain runs to 294 residues: Large ribosomal subunit protein uL4m (294 aa).

Positions 120-139 (VRGGGRKPWQQKGSGRARHG) are disordered. Residue Arg147 is modified to Omega-N-methylarginine.

It belongs to the universal ribosomal protein uL4 family. As to quaternary structure, component of the mitochondrial ribosome large subunit (39S) which comprises a 16S rRNA and about 50 distinct proteins. Interacts with MIEF1 upstream open reading frame protein.

It is found in the mitochondrion. This is Large ribosomal subunit protein uL4m (MRPL4) from Bos taurus (Bovine).